A 336-amino-acid polypeptide reads, in one-letter code: Phosphate acyltransferase (336 aa).

This sequence belongs to the PlsX family. Homodimer. Probably interacts with PlsY.

The protein localises to the cytoplasm. The enzyme catalyses a fatty acyl-[ACP] + phosphate = an acyl phosphate + holo-[ACP]. The protein operates within lipid metabolism; phospholipid metabolism. Catalyzes the reversible formation of acyl-phosphate (acyl-PO(4)) from acyl-[acyl-carrier-protein] (acyl-ACP). This enzyme utilizes acyl-ACP as fatty acyl donor, but not acyl-CoA. In Pseudomonas fluorescens (strain Pf0-1), this protein is Phosphate acyltransferase.